A 286-amino-acid chain; its full sequence is D-tagatose-1,6-bisphosphate aldolase subunit KbaY (286 aa).

Catalysis depends on D82, which acts as the Proton donor. Residues H83 and H180 each coordinate Zn(2+). G181 contacts dihydroxyacetone phosphate. H208 serves as a coordination point for Zn(2+). Dihydroxyacetone phosphate-binding positions include 209–211 (GAS) and 230–233 (NVAT).

It belongs to the class II fructose-bisphosphate aldolase family. TagBP aldolase KbaY subfamily. As to quaternary structure, homotetramer. Forms a complex with KbaZ. The cofactor is Zn(2+).

It catalyses the reaction D-tagatofuranose 1,6-bisphosphate = D-glyceraldehyde 3-phosphate + dihydroxyacetone phosphate. It participates in carbohydrate metabolism; D-tagatose 6-phosphate degradation; D-glyceraldehyde 3-phosphate and glycerone phosphate from D-tagatose 6-phosphate: step 2/2. Catalytic subunit of the tagatose-1,6-bisphosphate aldolase KbaYZ, which catalyzes the reversible aldol condensation of dihydroxyacetone phosphate (DHAP or glycerone-phosphate) with glyceraldehyde 3-phosphate (G3P) to produce tagatose 1,6-bisphosphate (TBP). Requires KbaZ subunit for full activity and stability. Is involved in the catabolism of N-acetylgalactosamine and D-galactosamine. The chain is D-tagatose-1,6-bisphosphate aldolase subunit KbaY (kbaY) from Escherichia coli.